The sequence spans 465 residues: MAAQLQPYNIIETCHISPPKGTVASTTLPLTFFDAPWLSLPLADSLFFFSYQNSTESFLQDFVPNLKHSLSITLQHFFPYAGKLIIPPRPDPPYLHYNAGEDSLVFTVAESTETDFDQLKSDSPKDISVLHGVLPKLPPPHVSPEGIQMRPIMAMQVTIFPGAGICIGNSATHVVADGVTFSHFMKYWMSLTKSSGKDPATVLLPSLPIHSCRNIIKDPGEVAAGHLERFWSQNSAKHSSHVTPENMVRATFTLSRKQIDNLKSWVTEQSENQSPVSTFVVTLAFIWVSLIKTLVQDSETEAKDEVFHLMINVDCRNRLKYTQPIPQTYFGNCMAPGIVSVKKHDLLGEKCVMAASDAITARIKDMLSSDLLKTAPRWGQGVRKWVMSHYPTSIAGAPKLGLYDMDFGLGKPCKMEIVHIETGGSIAFSESRDGSNGVEIGIALEKKKMDVFDSLLQKGIKKFAT.

At methionine 1 the chain carries N-acetylmethionine. Active-site proton acceptor residues include histidine 173 and aspartate 406.

Belongs to the plant acyltransferase family. Highly expressed in flowers, and leaves. Lower levels of expression in stems, roots and siliques.

Functionally, involved in the acylation of the 6'' position of the 3-O-glucose residue of anthocyanin. Also able to use flavonol 3-glucosides as the acyl acceptor. In Arabidopsis thaliana (Mouse-ear cress), this protein is Coumaroyl-CoA:anthocyanidin 3-O-glucoside-6''-O-coumaroyltransferase 2 (3AT2).